The primary structure comprises 231 residues: uncharacterized protein (231 aa).

Position 10 to 34 (10 to 34) interacts with NADP(+); it reads IITGASSGIGAATAKALEKQGVKVV. Ser-140 is a substrate binding site. The active-site Proton acceptor is the Tyr-153.

It belongs to the short-chain dehydrogenases/reductases (SDR) family.

This is an uncharacterized protein from Staphylococcus haemolyticus (strain JCSC1435).